The chain runs to 448 residues: Protein Z-dependent protease inhibitor (448 aa).

The signal sequence occupies residues 1–21; that stretch reads MRVASSLFLPVLLTEVWLVTS. The tract at residues 33 to 70 is disordered; it reads VHLESQDYENQTWEEYTRTDPREEEEEEEEKEEGKDEE. Residues 54 to 63 are compositionally biased toward acidic residues; it reads REEEEEEEEK. A glycan (N-linked (GlcNAc...) asparagine) is linked at Asn81. Residues 140-157 are heparin-binding; sequence AGPLILPALFKKVKETFS. Residues Asn184, Asn278, and Asn299 are each glycosylated (N-linked (GlcNAc...) asparagine).

It belongs to the serpin family. Phosphorylated by FAM20C in the extracellular medium. In terms of tissue distribution, detectable in liver, but not in heart, brain, spleen, lung, kidney, skeletal muscle or testes.

The protein resides in the secreted. Inhibits activity of the coagulation protease factor Xa in the presence of PROZ, calcium and phospholipids. Also inhibits factor XIa in the absence of cofactors. This Mus musculus (Mouse) protein is Protein Z-dependent protease inhibitor (Serpina10).